The following is a 529-amino-acid chain: Bifunctional purine biosynthesis protein PurH (529 aa).

Residues 1–148 (MQQRRPVRRA…KNHKDVAIVV (148 aa)) enclose the MGS-like domain. Lysine 287 carries the N6-acetyllysine modification.

This sequence belongs to the PurH family.

It carries out the reaction (6R)-10-formyltetrahydrofolate + 5-amino-1-(5-phospho-beta-D-ribosyl)imidazole-4-carboxamide = 5-formamido-1-(5-phospho-D-ribosyl)imidazole-4-carboxamide + (6S)-5,6,7,8-tetrahydrofolate. The enzyme catalyses IMP + H2O = 5-formamido-1-(5-phospho-D-ribosyl)imidazole-4-carboxamide. It functions in the pathway purine metabolism; IMP biosynthesis via de novo pathway; 5-formamido-1-(5-phospho-D-ribosyl)imidazole-4-carboxamide from 5-amino-1-(5-phospho-D-ribosyl)imidazole-4-carboxamide (10-formyl THF route): step 1/1. The protein operates within purine metabolism; IMP biosynthesis via de novo pathway; IMP from 5-formamido-1-(5-phospho-D-ribosyl)imidazole-4-carboxamide: step 1/1. The sequence is that of Bifunctional purine biosynthesis protein PurH from Escherichia coli (strain SMS-3-5 / SECEC).